Here is a 61-residue protein sequence, read N- to C-terminus: Photosystem II reaction center protein K (61 aa).

The propeptide occupies 1–24 (MPNILSLTCICFNSVIYPTSFFFA). The helical transmembrane segment at 32-52 (IFNPIVDFMPVIPVLFFLLAF) threads the bilayer.

This sequence belongs to the PsbK family. As to quaternary structure, PSII is composed of 1 copy each of membrane proteins PsbA, PsbB, PsbC, PsbD, PsbE, PsbF, PsbH, PsbI, PsbJ, PsbK, PsbL, PsbM, PsbT, PsbX, PsbY, PsbZ, Psb30/Ycf12, at least 3 peripheral proteins of the oxygen-evolving complex and a large number of cofactors. It forms dimeric complexes.

The protein resides in the plastid. It is found in the chloroplast thylakoid membrane. Its function is as follows. One of the components of the core complex of photosystem II (PSII). PSII is a light-driven water:plastoquinone oxidoreductase that uses light energy to abstract electrons from H(2)O, generating O(2) and a proton gradient subsequently used for ATP formation. It consists of a core antenna complex that captures photons, and an electron transfer chain that converts photonic excitation into a charge separation. The protein is Photosystem II reaction center protein K of Oryza nivara (Indian wild rice).